Consider the following 310-residue polypeptide: Nucleotide-binding protein BLA_1368 (310 aa).

Residues methionine 1–proline 21 form a disordered region. Glycine 32–serine 39 lines the ATP pocket. Aspartate 83–serine 86 lines the GTP pocket.

This sequence belongs to the RapZ-like family.

Functionally, displays ATPase and GTPase activities. The protein is Nucleotide-binding protein BLA_1368 of Bifidobacterium animalis subsp. lactis (strain AD011).